We begin with the raw amino-acid sequence, 46 residues long: Iota-conotoxin RXIA (46 aa).

Proline 2 and proline 11 each carry 4-hydroxyproline; partial. 4 disulfide bridges follow: cysteine 5-cysteine 19, cysteine 12-cysteine 22, cysteine 18-cysteine 27, and cysteine 21-cysteine 38. Proline 29 carries the 4-hydroxyproline modification. A D-phenylalanine modification is found at phenylalanine 44.

It belongs to the conotoxin I1 superfamily. The natural D-Phe-44 form of the peptide is more potent than the L-Phe-44 form. As to expression, expressed by the venom duct.

It localises to the secreted. In terms of biological role, iota-conotoxins bind to voltage-gated sodium channels and act as agonists by shifting the voltage-dependence of activation to more hyperpolarized levels. This toxin acts on Nav1.6/SCN8A &gt; Nav1.2/SCN2A &gt; Nav1.7/SCN9A sodium channels. Produces general excitatory symptoms upon intracorporeal injection and repetitive action potentials in the frog cutaneous pectoris muscle. Natural peptide (with D-Phe) is active on nerve, but not on muscle. Synthetic peptide (with L-Phe) is not active on both nerve and muscle. In Conus radiatus (Rayed cone), this protein is Iota-conotoxin RXIA.